A 565-amino-acid chain; its full sequence is MISNDYTKFSSKRRSLRYSNRILLLMGTILLIVVYFYSDILVDKSIIMFRNENKGQMLSGSFTLRHIYRHGVDKGHRTQEVLDITKQNEDAFGRYFKRELDEFNANAVGLNTDDPLRELWTSDKQFITDNPFNFKFGLKGNKQILHRMVDRDPSFIEPYLDFARESPDMAAKVTIDWVEGGEVVVVPDITDKNTVVSLALMSSNAYVRLPYTDDWRNVSLPWDSNDTPGYGWESNGIRGHVFVNDLENIVVISIKGTSAQGLPGSGEDETTGNDKLNDNLLFSCCCARVSYLWTTVCDCYLKSYTCDETCLEQAIKEKDHYYQAAMDIYKDTLRQYPHATIWLTGHSLGGALASLVGRTYGLPTVAFESPGELLAAKRLHLPFPPGLPSYDEGIWHIGHTADPIYMGTCNGASSTCSIAGYAMETGCHSGKQCVYDVVRDKGWHVNMLNHRIHTVIDGILTKYDKVATCHEPDPCVDCYNWNFMPHGKKPKKQTTSSSSEKVDTSTTKSIDRTTITTRTNEKKWHPNPKDPSTTTTDDKTLMSSCLHRNWVGICTEYTTFTKRLI.

The Cytoplasmic portion of the chain corresponds to 1 to 21; it reads MISNDYTKFSSKRRSLRYSNR. A helical; Signal-anchor for type II membrane protein membrane pass occupies residues 22–42; sequence ILLLMGTILLIVVYFYSDILV. The Lumenal segment spans residues 43 to 565; the sequence is DKSIIMFRNE…EYTTFTKRLI (523 aa). N-linked (GlcNAc...) asparagine glycosylation is present at asparagine 217. Residue serine 347 is the Charge relay system of the active site. The tract at residues 488–538 is disordered; that stretch reads KKPKKQTTSSSSEKVDTSTTKSIDRTTITTRTNEKKWHPNPKDPSTTTTDD. A compositionally biased stretch (low complexity) spans 493-518; that stretch reads QTTSSSSEKVDTSTTKSIDRTTITTR. Residues 519–528 show a composition bias toward basic and acidic residues; sequence TNEKKWHPNP.

Belongs to the AB hydrolase superfamily. Lipase family. As to quaternary structure, binds to both phosphatidylinositol (PI) and phosphatidylinositol 3,5-bisphosphate (PIP2).

It localises to the endosome. It is found in the multivesicular body membrane. The protein localises to the prevacuolar compartment membrane. The catalysed reaction is a triacylglycerol + H2O = a diacylglycerol + a fatty acid + H(+). Lipase which is essential for lysis of subvacuolar cytoplasm to vacuole targeted bodies and intravacuolar autophagic bodies. Involved in the lysis of intravacuolar multivesicular body (MVB) vesicles. The intravacuolar membrane disintegration by ATG15 is critical to life span extension. In Vanderwaltozyma polyspora (strain ATCC 22028 / DSM 70294 / BCRC 21397 / CBS 2163 / NBRC 10782 / NRRL Y-8283 / UCD 57-17) (Kluyveromyces polysporus), this protein is Putative lipase ATG15 (ATG15).